Consider the following 124-residue polypeptide: MSQQPYYETMYILRPDIPEEEVETHVTKYREMVTEAGAEVLDNQMRGKRRLAYPISNHKEGIYVQLSHNGNGQQVAVLEKAMRLSEDVIRYLTVKQEGPLPAPRIVPGSEPEPVEQQEAAAVEA.

The interval 99–124 is disordered; it reads PLPAPRIVPGSEPEPVEQQEAAAVEA. Positions 114–124 are enriched in low complexity; sequence VEQQEAAAVEA.

The protein belongs to the bacterial ribosomal protein bS6 family.

Binds together with bS18 to 16S ribosomal RNA. This chain is Small ribosomal subunit protein bS6, found in Prochlorococcus marinus (strain MIT 9303).